The primary structure comprises 319 residues: MKNKELNLHTLYTQHNRESWSGFGGHLSIAVSEEEAKAVEGLNDYLSVEEVETIYIPLVRLLHLHVKSAAERNKHVNVFLKHPHSAKIPFIIGIAGSVAVGKSTTARILQKLLSRLPDRPKVSLITTDGFLFPTAELKKKNMMSRKGFPESYDVKALLEFLNDLKSGKDSVKAPVYSHLTYDREEGVFEVVEQADIVIIEGINVLQSPTLEDDRENPRIFVSDFFDFSIYVDAEESRIFTWYLERFRLLRETAFQNPDSYFHKFKDLSDQEADEMAASIWESVNRPNLYENILPTKFRSDLILRKGDGHKVEEVLVRRV.

An ATP-binding site is contributed by 96–103 (GSVAVGKS).

The protein belongs to the prokaryotic pantothenate kinase family.

Its subcellular location is the cytoplasm. The enzyme catalyses (R)-pantothenate + ATP = (R)-4'-phosphopantothenate + ADP + H(+). The protein operates within cofactor biosynthesis; coenzyme A biosynthesis; CoA from (R)-pantothenate: step 1/5. The chain is Pantothenate kinase (coaA) from Bacillus subtilis (strain 168).